A 493-amino-acid polypeptide reads, in one-letter code: Ribosomal protein uS12 methylthiotransferase RimO (493 aa).

One can recognise an MTTase N-terminal domain in the interval 5 to 121 (RTVALVTLGC…ISDRLQTILN (117 aa)). 6 residues coordinate [4Fe-4S] cluster: C14, C50, C84, C198, C202, and C205. One can recognise a Radical SAM core domain in the interval 184–415 (LGTSPVASVK…QLAEELTSQR (232 aa)). Residues 417–487 (EERVGETLQV…GVDLVAEHHE (71 aa)) form the TRAM domain.

It belongs to the methylthiotransferase family. RimO subfamily. Requires [4Fe-4S] cluster as cofactor.

The protein localises to the cytoplasm. The catalysed reaction is L-aspartate(89)-[ribosomal protein uS12]-hydrogen + (sulfur carrier)-SH + AH2 + 2 S-adenosyl-L-methionine = 3-methylsulfanyl-L-aspartate(89)-[ribosomal protein uS12]-hydrogen + (sulfur carrier)-H + 5'-deoxyadenosine + L-methionine + A + S-adenosyl-L-homocysteine + 2 H(+). Functionally, catalyzes the methylthiolation of an aspartic acid residue of ribosomal protein uS12. This is Ribosomal protein uS12 methylthiotransferase RimO from Streptomyces griseus subsp. griseus (strain JCM 4626 / CBS 651.72 / NBRC 13350 / KCC S-0626 / ISP 5235).